We begin with the raw amino-acid sequence, 304 residues long: uncharacterized protein (304 aa).

This is an uncharacterized protein from Ureaplasma parvum serovar 3 (strain ATCC 700970).